We begin with the raw amino-acid sequence, 324 residues long: Putative 12-oxophytodienoate reductase-like protein 1 (324 aa).

An N-acetylmethionine modification is found at M1. Residues 14–16, A47, and Q89 contribute to the FMN site; that span reads PMA. The segment covering 99–113 has biased composition (polar residues); that stretch reads QDCQPNGESPVSSTD. The disordered stretch occupies residues 99–128; that stretch reads QDCQPNGESPVSSTDKPFADDPSNEFTPPR. Position 160-163 (160-163) interacts with substrate; the sequence is HGAH. Y165 (proton donor) is an active-site residue. Position 212 (R212) interacts with FMN. R252 lines the substrate pocket. FMN contacts are provided by residues G282 and 303 to 304; that span reads GR.

This sequence belongs to the NADH:flavin oxidoreductase/NADH oxidase family. Requires FMN as cofactor.

Functionally, putative oxophytodienoate reductase that may be involved in the biosynthesis or metabolism of oxylipin signaling molecules. The chain is Putative 12-oxophytodienoate reductase-like protein 1 from Arabidopsis thaliana (Mouse-ear cress).